The following is a 483-amino-acid chain: tRNA sulfurtransferase (483 aa).

A THUMP domain is found at 62–166; it reads PEICDALTRI…QDKLILVKAR (105 aa). Residues 184-185, K266, G288, and Q297 each bind ATP; that span reads LI. A disulfide bridge connects residues C345 and C457. A Rhodanese domain is found at 405–483; it reads LADTDVLLDI…GYTNVKVYRP (79 aa). Residue C457 is the Cysteine persulfide intermediate of the active site.

This sequence belongs to the ThiI family.

It is found in the cytoplasm. The enzyme catalyses [ThiI sulfur-carrier protein]-S-sulfanyl-L-cysteine + a uridine in tRNA + 2 reduced [2Fe-2S]-[ferredoxin] + ATP + H(+) = [ThiI sulfur-carrier protein]-L-cysteine + a 4-thiouridine in tRNA + 2 oxidized [2Fe-2S]-[ferredoxin] + AMP + diphosphate. The catalysed reaction is [ThiS sulfur-carrier protein]-C-terminal Gly-Gly-AMP + S-sulfanyl-L-cysteinyl-[cysteine desulfurase] + AH2 = [ThiS sulfur-carrier protein]-C-terminal-Gly-aminoethanethioate + L-cysteinyl-[cysteine desulfurase] + A + AMP + 2 H(+). It participates in cofactor biosynthesis; thiamine diphosphate biosynthesis. Its function is as follows. Catalyzes the ATP-dependent transfer of a sulfur to tRNA to produce 4-thiouridine in position 8 of tRNAs, which functions as a near-UV photosensor. Also catalyzes the transfer of sulfur to the sulfur carrier protein ThiS, forming ThiS-thiocarboxylate. This is a step in the synthesis of thiazole, in the thiamine biosynthesis pathway. The sulfur is donated as persulfide by IscS. This Yersinia pseudotuberculosis serotype O:1b (strain IP 31758) protein is tRNA sulfurtransferase.